Consider the following 181-residue polypeptide: SAGA-associated factor 11 (181 aa).

An SGF11-type zinc finger spans residues 93-114; that stretch reads FNCMNCGRQIVAGRFAPHLEKC. Residues 116–125 show a composition bias toward basic residues; it reads GKGRKARAKT. The interval 116–181 is disordered; sequence GKGRKARAKT…FTVRENVKGD (66 aa). Positions 126–153 are enriched in low complexity; that stretch reads TRSTTAAQNRNARRSPNPRYSPYPNSAS.

Belongs to the SGF11 family. Component of a deubiquitination module (DUB module) formed by ENY2, SGF11, and UBP22 in Arabidopsis. Interacts directly with ENY2 and UBP22. Interacts with DDA1. In terms of processing, ubiquitinated in DET1-dependent manner. Ubiquitination probably leads to its subsequent proteasomal degradation.

The protein resides in the nucleus. It localises to the nucleoplasm. Component of a deubiquitination module (DUB module) that specifically deubiquinates monoubiquinated histone H2B (H2Bub). Does not seem to be a component of the TREX-2 complex. Seems to act independently of the SAGA multiprotein complex. The DUB module is responsible for the major H2Bub deubiquitinase activity in Arabidopsis. The protein is SAGA-associated factor 11 of Arabidopsis thaliana (Mouse-ear cress).